The following is a 996-amino-acid chain: Leucine-rich repeat receptor-like kinase protein THICK TASSEL DWARF1 (996 aa).

Residues methionine 1–alanine 26 form the signal peptide. LRR repeat units follow at residues threonine 78–leucine 103, aspartate 104–methionine 127, proline 128–alanine 151, phenylalanine 153–alanine 178, serine 180–aspartate 201, leucine 202–leucine 226, leucine 251–leucine 275, serine 276–leucine 299, threonine 300–leucine 323, asparagine 325–phenylalanine 349, glutamate 351–asparagine 371, glycine 372–glycine 395, asparagine 397–cysteine 419, lysine 420–leucine 443, glutamine 445–glycine 466, aspartate 467–leucine 490, proline 491–leucine 514, asparagine 516–cysteine 538, alanine 539–leucine 562, lysine 563–methionine 586, and threonine 587–valine 611. A helical transmembrane segment spans residues lysine 646–alanine 666. The region spanning leucine 703 to serine 978 is the Protein kinase domain. ATP is bound by residues isoleucine 709–valine 717 and lysine 731. The active-site Proton acceptor is the aspartate 828.

This sequence belongs to the protein kinase superfamily. Ser/Thr protein kinase family. As to expression, highly expressed in the apex of the vegetative seedlings. Lower expression in young leaves, ears and tassels, embryos and roots. Not expressed in the shoot meristem itself. Detected in the three outermost layers of the inflorescence meristem, and on its flanks at positions of prospective spikelet pair meristems. Not confined to meristematic cells but also detected in primordia of glumes, lemmas and stamens.

It localises to the membrane. The enzyme catalyses L-seryl-[protein] + ATP = O-phospho-L-seryl-[protein] + ADP + H(+). The catalysed reaction is L-threonyl-[protein] + ATP = O-phospho-L-threonyl-[protein] + ADP + H(+). Receptor-like kinase protein that regulates meristem size during inflorescence and flower development. Promotes vegetative meristem growth and restricts inflorescence and floral meristem growth. Based on additive and synergistic phenotypes of double mutants, it is probable that unlike CLV1 and CLV2 in A.thaliana, TD1 and FAE2 do not function exclusively in a single pathway. However, KN-1 and TD1 do function in a linear pathway to maintain vegetative meristem homeostasis, but they may interact with different partners during development. In Zea mays (Maize), this protein is Leucine-rich repeat receptor-like kinase protein THICK TASSEL DWARF1 (TD1).